A 469-amino-acid polypeptide reads, in one-letter code: Regulator of G-protein signaling 7 (469 aa).

Residues 37 to 112 (EKNGIPIRTV…DDGTFYRFQT (76 aa)) form the DEP domain. 2 positions are modified to phosphoserine: S229 and S241. A disordered region spans residues 236-255 (DIRSHSPTHTPTPETKPPTE). Position 243 is a phosphothreonine (T243). Residues 255 to 316 (EDELHQQIKY…LSDDTTFWEL (62 aa)) form the G protein gamma domain. The region spanning 333 to 448 (GMDEALKDPV…IRSSAYQELL (116 aa)) is the RGS domain. Position 434 is a phosphoserine (S434).

In terms of assembly, interacts with GNB5, forming the RGS7-GNB5 complex. Interacts with GPR158; promotes the GTPase activator activity of the RGS7-GNB5 complex in absence of glycine, in contrast GTPase activator activity of the RGS7-GNB5 complex is inhibited in presence of glycine. Interacts with GPR179. Interacts with PKD1; this prevents rapid proteasomal degradation. Interacts with RGS7BP, leading to regulate the subcellular location of the heterodimer formed with GNB5. Interacts (phosphorylated form) with 14-3-3 protein YWHAQ. Interacts with SNAPIN. Interacts with GNAI1. Interacts with GNAO1, GNAI3 and GNAZ. Post-translationally, palmitoylated. Ubiquitinated, leading to rapid proteasomal degradation. In terms of processing, phosphorylation and subsequent interaction with 14-3-3 proteins inhibits GAP activity. Detected in brain (at protein level).

It is found in the cytoplasm. It localises to the cytosol. Its subcellular location is the cell membrane. The protein localises to the membrane. Functionally, GTPase activator component of the RGS7-GNB5 complex that regulates G protein-coupled receptor signaling cascades. The RGS7-GNB5 complex acts as an inhibitor signal transduction by promoting the GTPase activity of G protein alpha subunits, such as GNAO1, thereby driving them into their inactive GDP-bound form. May play a role in synaptic vesicle exocytosis. Glycine-dependent regulation of the RGS7-GNB5 complex by GPR158 affects mood and cognition via its ability to regulate neuronal excitability in L2/L3 pyramidal neurons of the prefrontal cortex. Modulates the activity of potassium channels that are activated by GNAO1 in response to muscarinic acetylcholine receptor M2/CHRM2 signaling. This Mus musculus (Mouse) protein is Regulator of G-protein signaling 7 (Rgs7).